Reading from the N-terminus, the 210-residue chain is Peptidyl-tRNA hydrolase (210 aa).

Tyr15 is a tRNA binding site. His20 functions as the Proton acceptor in the catalytic mechanism. Residues Phe66, Asn68, and Asn114 each coordinate tRNA. The disordered stretch occupies residues Ile186–Ala210.

Belongs to the PTH family. Monomer.

The protein resides in the cytoplasm. The enzyme catalyses an N-acyl-L-alpha-aminoacyl-tRNA + H2O = an N-acyl-L-amino acid + a tRNA + H(+). Hydrolyzes ribosome-free peptidyl-tRNAs (with 1 or more amino acids incorporated), which drop off the ribosome during protein synthesis, or as a result of ribosome stalling. Its function is as follows. Catalyzes the release of premature peptidyl moieties from peptidyl-tRNA molecules trapped in stalled 50S ribosomal subunits, and thus maintains levels of free tRNAs and 50S ribosomes. The polypeptide is Peptidyl-tRNA hydrolase (Variovorax paradoxus (strain S110)).